The following is an 87-amino-acid chain: Small ribosomal subunit protein bS20 (87 aa).

The segment at 1 to 20 (MANHKSAEKRARQTIKKTER) is disordered.

Belongs to the bacterial ribosomal protein bS20 family.

Functionally, binds directly to 16S ribosomal RNA. This Campylobacter jejuni subsp. jejuni serotype O:2 (strain ATCC 700819 / NCTC 11168) protein is Small ribosomal subunit protein bS20.